The chain runs to 257 residues: Phosphate import ATP-binding protein PstB (257 aa).

The 242-residue stretch at 11–252 (IQVRDLNFYY…PAKKQTEDYI (242 aa)) folds into the ABC transporter domain. 43 to 50 (GPSGSGKS) provides a ligand contact to ATP.

This sequence belongs to the ABC transporter superfamily. Phosphate importer (TC 3.A.1.7) family. As to quaternary structure, the complex is composed of two ATP-binding proteins (PstB), two transmembrane proteins (PstC and PstA) and a solute-binding protein (PstS).

It localises to the cell inner membrane. It carries out the reaction phosphate(out) + ATP + H2O = ADP + 2 phosphate(in) + H(+). In terms of biological role, part of the ABC transporter complex PstSACB involved in phosphate import. Responsible for energy coupling to the transport system. The polypeptide is Phosphate import ATP-binding protein PstB (Salmonella choleraesuis (strain SC-B67)).